Consider the following 347-residue polypeptide: Probable ribonucleotide transport ATP-binding protein mkl (347 aa).

Positions 16 to 252 (IEVKGLTKSF…DEPVVRQFLN (237 aa)) constitute an ABC transporter domain. Position 48–55 (48–55 (GPSGTGKS)) interacts with ATP.

The protein belongs to the ABC transporter superfamily.

Not known, could be involved in the transport of ribonucleotides. The polypeptide is Probable ribonucleotide transport ATP-binding protein mkl (mkl) (Mycobacterium leprae (strain TN)).